A 92-amino-acid polypeptide reads, in one-letter code: Small ribosomal subunit protein uS19 (92 aa).

This sequence belongs to the universal ribosomal protein uS19 family.

Functionally, protein S19 forms a complex with S13 that binds strongly to the 16S ribosomal RNA. This is Small ribosomal subunit protein uS19 from Variovorax paradoxus (strain S110).